A 399-amino-acid chain; its full sequence is Serine/threonine-protein kinase PknL (399 aa).

At 1-368 (MVEAGTRDPL…FIWARQHARR (368 aa)) the chain is on the cytoplasmic side. The region spanning 19–278 (YLVQAKIASG…IAMGADLEAI (260 aa)) is the Protein kinase domain. ATP contacts are provided by residues 25 to 33 (IASGGTSTV) and Lys-48. The residue at position 32 (Thr-32) is a Phosphothreonine; by autocatalysis. Thr-62 carries the phosphothreonine; by autocatalysis modification. Asp-142 acts as the Proton acceptor in catalysis. Phosphothreonine; by autocatalysis is present on residues Thr-173, Thr-175, and Thr-323. A disordered region spans residues 312–346 (GQLGAKPVHHPTRQLTRQPGDCSEPASGSEPEHEP). Residues 369 to 389 (MVLVWVSVVLAITGLVASAAW) form a helical membrane-spanning segment. Over 390–399 (TIGSNLSGLL) the chain is Extracellular.

This sequence belongs to the protein kinase superfamily. Ser/Thr protein kinase family. Post-translationally, autophosphorylated. Thr-173 is required for autophosphorylation and transphosphorylation activities. Thr-175 is not necessary for autophosphorylation activity, but is required for full kinase activity.

The protein localises to the cell membrane. It catalyses the reaction L-seryl-[protein] + ATP = O-phospho-L-seryl-[protein] + ADP + H(+). The catalysed reaction is L-threonyl-[protein] + ATP = O-phospho-L-threonyl-[protein] + ADP + H(+). In terms of biological role, phosphorylates the DNA-binding protein MT2231. May be involved in the regulation of cell division and cell envelope biosynthesis. The protein is Serine/threonine-protein kinase PknL (pknL) of Mycobacterium tuberculosis (strain CDC 1551 / Oshkosh).